The sequence spans 326 residues: L-carnitine dehydrogenase (326 aa).

19 to 24 provides a ligand contact to NAD(+); sequence GTGVIG.

This sequence belongs to the 3-hydroxyacyl-CoA dehydrogenase family. L-carnitine dehydrogenase subfamily. Homodimer.

It localises to the cytoplasm. The catalysed reaction is carnitine + NAD(+) = 3-dehydrocarnitine + NADH + H(+). It participates in amine and polyamine metabolism; carnitine metabolism. Functionally, catalyzes the NAD(+)-dependent oxidation of L-carnitine to 3-dehydrocarnitine. The polypeptide is L-carnitine dehydrogenase (Bacillus cereus (strain ZK / E33L)).